A 344-amino-acid polypeptide reads, in one-letter code: Ribosomal RNA large subunit methyltransferase Cfr (344 aa).

Glu-90 acts as the Proton acceptor in catalysis. In terms of domain architecture, Radical SAM core spans 97–330 (KQGWESFCIS…ATVRTQFGSE (234 aa)). Cys-104 and Cys-335 are oxidised to a cystine. [4Fe-4S] cluster is bound by residues Cys-111, Cys-115, and Cys-118. S-adenosyl-L-methionine-binding positions include 157-158 (GE), Ser-188, 211-213 (SLH), and Asn-292. The active-site S-methylcysteine intermediate is the Cys-335.

The protein belongs to the radical SAM superfamily. RlmN family. Cfr subfamily. The cofactor is [4Fe-4S] cluster.

The protein resides in the cytoplasm. The enzyme catalyses adenosine(2503) in 23S rRNA + 2 reduced [2Fe-2S]-[ferredoxin] + 2 S-adenosyl-L-methionine = 8-methyladenosine(2503) in 23S rRNA + 5'-deoxyadenosine + L-methionine + 2 oxidized [2Fe-2S]-[ferredoxin] + S-adenosyl-L-homocysteine. Functionally, specifically methylates position 8 of adenine 2503 in 23S rRNA. Confers resistance to some classes of antibiotics. The sequence is that of Ribosomal RNA large subunit methyltransferase Cfr from Clostridium botulinum (strain Okra / Type B1).